The following is a 256-amino-acid chain: Probable transcriptional regulatory protein A1I_03240 (256 aa).

A disordered region spans residues 1-21 (MAGHSKFKNIQHRKGAQDKKR).

Belongs to the TACO1 family.

It localises to the cytoplasm. This chain is Probable transcriptional regulatory protein A1I_03240, found in Rickettsia bellii (strain OSU 85-389).